Consider the following 312-residue polypeptide: Olfactory receptor 2T10 (312 aa).

Residues 1 to 25 (MRLANQTLGGDFFLLGIFSQISHPG) are Extracellular-facing. Asn5 carries N-linked (GlcNAc...) asparagine glycosylation. The helical transmembrane segment at 26-49 (RLCLLIFSIFLMAVSWNITLILLI) threads the bilayer. Residues 50–57 (HIDSSLHT) are Cytoplasmic-facing. The chain crosses the membrane as a helical span at residues 58-79 (PMYFFINQLSLIDLTYISVTVP). Residues 80–100 (KMLVNQLAKDKTISVLGCGTQ) lie on the Extracellular side of the membrane. The cysteines at positions 97 and 189 are disulfide-linked. A helical membrane pass occupies residues 101-120 (MYFYLQLGGAECCLLAAMAY). Residues 121–139 (DRYVAICHPLRYSVLMSHR) lie on the Cytoplasmic side of the membrane. A helical transmembrane segment spans residues 140–158 (VCLLLASGCWFVGSVDGFM). Topologically, residues 159–195 (LTPIAMSFPFCRSHEIQHFFCEVPAVLKLSCSDTSLY) are extracellular. A helical transmembrane segment spans residues 196–219 (KIFMYLCCVIMLLIPVTVISVSYY). The Cytoplasmic segment spans residues 220–236 (YIILTIHKMNSVEGRKK). Residues 237–259 (AFTTCSSHITVVSLFYGAAIYNY) traverse the membrane as a helical segment. The Extracellular segment spans residues 260 to 272 (MLPSSYQTPEKDM). The chain crosses the membrane as a helical span at residues 273–292 (MSSFFYTILTPVLNPIIYSF). Residues 293–312 (RNKDVTRALKKMLSVQKPPY) are Cytoplasmic-facing.

The protein belongs to the G-protein coupled receptor 1 family.

The protein localises to the cell membrane. In terms of biological role, odorant receptor. The sequence is that of Olfactory receptor 2T10 (OR2T10) from Homo sapiens (Human).